The sequence spans 245 residues: Carbohydrate deacetylase (245 aa).

Mg(2+) is bound by residues histidine 59 and histidine 125.

The protein belongs to the YdjC deacetylase family. Homodimer. Mg(2+) is required as a cofactor.

Its function is as follows. Probably catalyzes the deacetylation of acetylated carbohydrates an important step in the degradation of oligosaccharides. This Listeria monocytogenes serotype 4a (strain HCC23) protein is Carbohydrate deacetylase.